Consider the following 270-residue polypeptide: Molybdenum-pterin-binding protein MopB (270 aa).

2 Mop domains span residues 131 to 197 and 203 to 269; these read RTSA…LLAG and RLSV…ILAL.

It belongs to the ModE family.

In Rhodobacter capsulatus (Rhodopseudomonas capsulata), this protein is Molybdenum-pterin-binding protein MopB (mopB).